The following is a 98-amino-acid chain: Aspartyl/glutamyl-tRNA(Asn/Gln) amidotransferase subunit C (98 aa).

It belongs to the GatC family. Heterotrimer of A, B and C subunits.

The catalysed reaction is L-glutamyl-tRNA(Gln) + L-glutamine + ATP + H2O = L-glutaminyl-tRNA(Gln) + L-glutamate + ADP + phosphate + H(+). It catalyses the reaction L-aspartyl-tRNA(Asn) + L-glutamine + ATP + H2O = L-asparaginyl-tRNA(Asn) + L-glutamate + ADP + phosphate + 2 H(+). In terms of biological role, allows the formation of correctly charged Asn-tRNA(Asn) or Gln-tRNA(Gln) through the transamidation of misacylated Asp-tRNA(Asn) or Glu-tRNA(Gln) in organisms which lack either or both of asparaginyl-tRNA or glutaminyl-tRNA synthetases. The reaction takes place in the presence of glutamine and ATP through an activated phospho-Asp-tRNA(Asn) or phospho-Glu-tRNA(Gln). The chain is Aspartyl/glutamyl-tRNA(Asn/Gln) amidotransferase subunit C from Mycobacterium avium (strain 104).